Reading from the N-terminus, the 428-residue chain is UDP-N-acetylglucosamine 1-carboxyvinyltransferase (428 aa).

Position 25–26 (25–26 (KN)) interacts with phosphoenolpyruvate. Residue arginine 102 participates in UDP-N-acetyl-alpha-D-glucosamine binding. The active-site Proton donor is cysteine 126. Cysteine 126 is subject to 2-(S-cysteinyl)pyruvic acid O-phosphothioketal. UDP-N-acetyl-alpha-D-glucosamine is bound by residues aspartate 316 and valine 338.

Belongs to the EPSP synthase family. MurA subfamily.

Its subcellular location is the cytoplasm. It catalyses the reaction phosphoenolpyruvate + UDP-N-acetyl-alpha-D-glucosamine = UDP-N-acetyl-3-O-(1-carboxyvinyl)-alpha-D-glucosamine + phosphate. The protein operates within cell wall biogenesis; peptidoglycan biosynthesis. Its function is as follows. Cell wall formation. Adds enolpyruvyl to UDP-N-acetylglucosamine. The sequence is that of UDP-N-acetylglucosamine 1-carboxyvinyltransferase from Anaplasma marginale (strain Florida).